Here is a 558-residue protein sequence, read N- to C-terminus: Urocanate hydratase (558 aa).

NAD(+) contacts are provided by residues 54–55 (GG), Gln132, 178–180 (GMG), Glu198, 244–245 (NA), 265–269 (QTSAH), 275–276 (YL), and Tyr324. Cys412 is an active-site residue. Residue Gly494 participates in NAD(+) binding.

It belongs to the urocanase family. The cofactor is NAD(+).

Its subcellular location is the cytoplasm. The enzyme catalyses 4-imidazolone-5-propanoate = trans-urocanate + H2O. It participates in amino-acid degradation; L-histidine degradation into L-glutamate; N-formimidoyl-L-glutamate from L-histidine: step 2/3. Catalyzes the conversion of urocanate to 4-imidazolone-5-propionate. The polypeptide is Urocanate hydratase (Acinetobacter baumannii (strain AB307-0294)).